Here is a 693-residue protein sequence, read N- to C-terminus: C6 finger domain transcription factor nscR (693 aa).

Positions 17 to 43 (CELCRERKVKCDKLDPCTNCSSAGVIC) form a DNA-binding region, zn(2)-C6 fungal-type. Positions 589–608 (AANTLSVPHTPPSRSSITSS) are disordered.

It is found in the nucleus. In terms of biological role, transcription factor that specifically regulates the neosartoricin B biosynthesis gene cluster. This Trichophyton rubrum (strain ATCC MYA-4607 / CBS 118892) (Athlete's foot fungus) protein is C6 finger domain transcription factor nscR.